The chain runs to 363 residues: uncharacterized protein (363 aa).

29-36 provides a ligand contact to ATP; the sequence is GSINSGKT.

This sequence belongs to the archaeal ATPase family.

This is an uncharacterized protein from Methanocaldococcus jannaschii (strain ATCC 43067 / DSM 2661 / JAL-1 / JCM 10045 / NBRC 100440) (Methanococcus jannaschii).